Consider the following 1571-residue polypeptide: Pentafunctional AROM polypeptide (1571 aa).

The interval 1 to 384 (MEQPTTIQIL…HEQKASVVSN (384 aa)) is 3-dehydroquinate synthase. NAD(+)-binding positions include 44–46 (DTN), 81–84 (ESSK), 114–116 (GGV), and aspartate 119. A 7-phospho-2-dehydro-3-deoxy-D-arabino-heptonate-binding site is contributed by arginine 130. Residue 139–140 (TT) participates in NAD(+) binding. 7-phospho-2-dehydro-3-deoxy-D-arabino-heptonate-binding residues include aspartate 146 and lysine 152. Lysine 161 serves as a coordination point for NAD(+). Asparagine 162 serves as a coordination point for 7-phospho-2-dehydro-3-deoxy-D-arabino-heptonate. NAD(+) contacts are provided by residues 179-182 (FLNT) and asparagine 190. Glutamate 194 serves as a coordination point for Zn(2+). 7-phospho-2-dehydro-3-deoxy-D-arabino-heptonate is bound by residues 194–197 (EVIK) and lysine 250. Glutamate 260 (proton acceptor; for 3-dehydroquinate synthase activity) is an active-site residue. Residues 264 to 268 (RNLLN) and histidine 271 contribute to the 7-phospho-2-dehydro-3-deoxy-D-arabino-heptonate site. Residue histidine 271 participates in Zn(2+) binding. The Proton acceptor; for 3-dehydroquinate synthase activity role is filled by histidine 275. The 7-phospho-2-dehydro-3-deoxy-D-arabino-heptonate site is built by histidine 287 and lysine 356. Histidine 287 provides a ligand contact to Zn(2+). The segment at 397–843 (VLPGIPKPLN…WDALAQTFKV (447 aa)) is EPSP synthase. The active-site For EPSP synthase activity is cysteine 825. A shikimate kinase region spans residues 866–1057 (ASIFIIGMRG…KKKDHSFFVS (192 aa)). 872–879 (GMRGAGKT) is a binding site for ATP. Residues 1058–1278 (LTLPDLQLSA…AAPGQVSAKD (221 aa)) form a 3-dehydroquinase region. The active-site Proton acceptor; for 3-dehydroquinate dehydratase activity is the histidine 1181. Catalysis depends on lysine 1209, which acts as the Schiff-base intermediate with substrate; for 3-dehydroquinate dehydratase activity. A shikimate dehydrogenase region spans residues 1291 to 1571 (AKKFALFGKP…EDARAAVMNI (281 aa)).

In the N-terminal section; belongs to the sugar phosphate cyclases superfamily. Dehydroquinate synthase family. The protein in the 2nd section; belongs to the EPSP synthase family. It in the 3rd section; belongs to the shikimate kinase family. This sequence in the 4th section; belongs to the type-I 3-dehydroquinase family. In the C-terminal section; belongs to the shikimate dehydrogenase family. As to quaternary structure, homodimer. It depends on Zn(2+) as a cofactor.

It localises to the cytoplasm. The catalysed reaction is 7-phospho-2-dehydro-3-deoxy-D-arabino-heptonate = 3-dehydroquinate + phosphate. It catalyses the reaction 3-dehydroquinate = 3-dehydroshikimate + H2O. The enzyme catalyses shikimate + NADP(+) = 3-dehydroshikimate + NADPH + H(+). It carries out the reaction shikimate + ATP = 3-phosphoshikimate + ADP + H(+). The catalysed reaction is 3-phosphoshikimate + phosphoenolpyruvate = 5-O-(1-carboxyvinyl)-3-phosphoshikimate + phosphate. It participates in metabolic intermediate biosynthesis; chorismate biosynthesis; chorismate from D-erythrose 4-phosphate and phosphoenolpyruvate: step 2/7. It functions in the pathway metabolic intermediate biosynthesis; chorismate biosynthesis; chorismate from D-erythrose 4-phosphate and phosphoenolpyruvate: step 3/7. The protein operates within metabolic intermediate biosynthesis; chorismate biosynthesis; chorismate from D-erythrose 4-phosphate and phosphoenolpyruvate: step 4/7. Its pathway is metabolic intermediate biosynthesis; chorismate biosynthesis; chorismate from D-erythrose 4-phosphate and phosphoenolpyruvate: step 5/7. It participates in metabolic intermediate biosynthesis; chorismate biosynthesis; chorismate from D-erythrose 4-phosphate and phosphoenolpyruvate: step 6/7. The AROM polypeptide catalyzes 5 consecutive enzymatic reactions in prechorismate polyaromatic amino acid biosynthesis. The sequence is that of Pentafunctional AROM polypeptide from Arthroderma otae (strain ATCC MYA-4605 / CBS 113480) (Microsporum canis).